Consider the following 279-residue polypeptide: Thymidylate synthase (279 aa).

141-142 (RR) is a binding site for dUMP. The active-site Nucleophile is Cys161. DUMP-binding positions include 181–184 (RSND), Asn192, and 222–224 (HVY). Asp184 provides a ligand contact to (6R)-5,10-methylene-5,6,7,8-tetrahydrofolate. Ala278 is a binding site for (6R)-5,10-methylene-5,6,7,8-tetrahydrofolate.

The protein belongs to the thymidylate synthase family. Bacterial-type ThyA subfamily. Homodimer.

It localises to the cytoplasm. The enzyme catalyses dUMP + (6R)-5,10-methylene-5,6,7,8-tetrahydrofolate = 7,8-dihydrofolate + dTMP. The protein operates within pyrimidine metabolism; dTTP biosynthesis. Functionally, catalyzes the reductive methylation of 2'-deoxyuridine-5'-monophosphate (dUMP) to 2'-deoxythymidine-5'-monophosphate (dTMP) while utilizing 5,10-methylenetetrahydrofolate (mTHF) as the methyl donor and reductant in the reaction, yielding dihydrofolate (DHF) as a by-product. This enzymatic reaction provides an intracellular de novo source of dTMP, an essential precursor for DNA biosynthesis. In Bacillus mojavensis, this protein is Thymidylate synthase.